The sequence spans 700 residues: Suprabasin (700 aa).

Residues 1–23 form the signal peptide; that stretch reads MYLVSLLSSCCLLVLLGTLPARA. 3 disordered regions span residues 133-158, 183-258, and 283-391; these read QGGSEAGKFGQGSHHAFGQGGNVANK, HAFG…VADK, and HAFG…GAHH. Residues 488 to 546 are a coiled coil; it reads KEAEKVAHGVQNGVNQAQKEAEKVAHGVQNGVNQAQKEAEKVAHGVQNGVNQAQKEAEK. Residues 641–654 are compositionally biased toward polar residues; that stretch reads GVNQPSKEANQLLN. Positions 641 to 669 are disordered; that stretch reads GVNQPSKEANQLLNGSHQGQGGYGGQHGG. The segment covering 658-668 has biased composition (gly residues); the sequence is QGQGGYGGQHG.

As to expression, detected in epidermis, in suprabasal keratinocytes. Detected in suprabasal layers of embryonic epidermis and in stratified layers of embryonic tongue and palate. Detected in adult stomach.

The protein resides in the secreted. In Mus musculus (Mouse), this protein is Suprabasin (Sbsn).